The chain runs to 351 residues: Ribonucleoside-diphosphate reductase subunit M2 B (351 aa).

The disordered stretch occupies residues 1–31 (MGDPERPEAAGLDQDERSSSDTNENEIKSNE). Residues aspartate 100, glutamate 131, and histidine 134 each coordinate Fe cation. Residue tyrosine 138 is part of the active site. Glutamate 194, glutamate 228, and histidine 231 together coordinate Fe cation.

This sequence belongs to the ribonucleoside diphosphate reductase small chain family. As to quaternary structure, heterotetramer with large (RRM1) subunit. Interacts with p53/TP53. Interacts with RRM1 in response to DNA damage. It depends on Fe cation as a cofactor.

It localises to the cytoplasm. Its subcellular location is the nucleus. It carries out the reaction a 2'-deoxyribonucleoside 5'-diphosphate + [thioredoxin]-disulfide + H2O = a ribonucleoside 5'-diphosphate + [thioredoxin]-dithiol. Plays a pivotal role in cell survival by repairing damaged DNA in a p53/TP53-dependent manner. Supplies deoxyribonucleotides for DNA repair in cells arrested at G1 or G2. Contains an iron-tyrosyl free radical center required for catalysis. Forms an active ribonucleotide reductase (RNR) complex with RRM1 which is expressed both in resting and proliferating cells in response to DNA damage. The sequence is that of Ribonucleoside-diphosphate reductase subunit M2 B (RRM2B) from Pongo abelii (Sumatran orangutan).